Consider the following 115-residue polypeptide: U3-lycotoxin-Ls1k (115 aa).

A signal peptide spans 1–20 (MKFVLLFGVLLVTLFSYSSA). The propeptide occupies 21–44 (EMFDDFDQADEDELLSLIEKEEAR). 4 disulfides stabilise this stretch: Cys48/Cys63, Cys55/Cys72, Cys62/Cys87, and Cys74/Cys85.

This sequence belongs to the neurotoxin 19 (CSTX) family. 01 subfamily. As to expression, expressed by the venom gland.

The protein localises to the secreted. The polypeptide is U3-lycotoxin-Ls1k (Lycosa singoriensis (Wolf spider)).